A 599-amino-acid chain; its full sequence is MFNKFNTKPLWEVSKTLSSVAQGFEPADMVIINSRLINVCTREVIENTDVAVSCGRIALVGDAKHCIGENTEVIDAKGQYIAPGFLDGHIHVESSMLSVSEYARSVVPHGTVGIYMDPHEICNVLGLNGVRYMIEDGKGTPLKNMVTTPSCVPAVPGFEDTGAAVGPEDVRETMKWDEIVGLGEMMNFPGILYSTDHAHGVVGETLKASKTVTGHYSLPETGKGLNGYIASGVRCCHESTRAEDALAKMRLGMYAMFREGSAWHDLKEVSKAITENKVDSRFAVLISDDTHPHTLLKDGHLDHIIKRAIEEGIEPLTAIQMVTINCAQCFQMDHELGSITPGKCADIVFIEDLKDVKITKVIIDGNLVAKGGLLTTSIAKYDYPEDAMNSMHIKNKITPDSFNIMAPNKEKITARVIEIIPERVGTYERHIELKVKDDKVQCDPNKDVLKAVVFERHHETGKAGYGFVKGFGIKRGAMAATVAHDAHNLLVIGTNDEDMALAANTLIECGGGMVAVQDGKVLGLVPLPIAGLMSNKPLEEMAEMVEKLDSAWKEIGCDIVSPFMTMALIPLACLPELRLTNRGLVDCNKFEFVSLFVEE.

Belongs to the metallo-dependent hydrolases superfamily. Adenine deaminase family. Requires Mn(2+) as cofactor.

It catalyses the reaction adenine + H2O + H(+) = hypoxanthine + NH4(+). The sequence is that of Adenine deaminase from Clostridium botulinum (strain Langeland / NCTC 10281 / Type F).